The following is a 311-amino-acid chain: MAGFCDSLGSCSVPHGLTRAIAHPPSYGRTDLSSGRRLWVNSAALSPAPYATGPGPAPSYAAATLAVPGSLLGASGGLAGADLAWLSLSGQQELLRLVRPPYSYSALIAMAIQSAPLRRLTLSQIYQYVAGNFPFYKRSKAGWQNSIRHNLSLNDCFKKVPRDENDPGKGNYWTLDPNCEKMFDNGNFRRKRRRRGETSEAAVPGASSPEGTALEPRGSTPQDPQTSPSPSEATTTCLSGFSTAMGALAGGFGALPDGLAHDFSLRRPPPTAAAHSPQIPNTAPGFAPGHQTGATGFRMGHLIYSRDGTEV.

A DNA-binding region (fork-head) is located at residues 99-193 (RPPYSYSALI…DNGNFRRKRR (95 aa)). 2 disordered regions span residues 188–237 (FRRK…TTTC) and 263–294 (FSLR…QTGA). Over residues 219–231 (STPQDPQTSPSPS) the composition is skewed to low complexity.

The protein localises to the nucleus. Functionally, possible transcriptional activator. This Mus musculus (Mouse) protein is Forkhead box protein I2.